The sequence spans 329 residues: MDSEIAADYSPMLIIYKSGRIERLVGETTVPPSSNPQNGVVSKDVVYSPDNNLSLRIYLPEKAATAETEASVKLPLLVYFHGGGFLVETAFSPTYHTFLTAAVSASDCVAVSVDYRRAPEHPIPTSYDDSWTALKWVFSHIAGSGSEDWLNKHADFSKVFLAGDSAGANITHHMTMKAAKDKLSPESLNESGISGIILVHPYFWSKTPVDDKETTDVAIRTWIESVWTLASPNSKDGSDDPFINVVQSESVDLSGLGCGKVLVMVAEKDALVRQGWGYWEKLGKSRWNGEVLDVVETKGEGHVFHLRDPNSEKAHELVHRFAGFIKGDK.

N-acetylmethionine is present on methionine 1. Residues 81–83 carry the Involved in the stabilization of the negatively charged intermediate by the formation of the oxyanion hole motif; the sequence is HGG. Residues serine 165, aspartate 269, and histidine 302 contribute to the active site.

This sequence belongs to the 'GDXG' lipolytic enzyme family. As to expression, expressed in flowers.

It catalyses the reaction a carboxylic ester + H2O = an alcohol + a carboxylate + H(+). Functionally, carboxylesterase acting on esters with varying acyl chain length. The chain is Probable carboxylesterase 13 (CXE13) from Arabidopsis thaliana (Mouse-ear cress).